Here is a 149-residue protein sequence, read N- to C-terminus: Nucleoside diphosphate kinase (149 aa).

6 residues coordinate ATP: Lys9, Phe57, Arg85, Thr91, Arg102, and Asn112. His115 functions as the Pros-phosphohistidine intermediate in the catalytic mechanism.

This sequence belongs to the NDK family. In terms of assembly, homotetramer. Mg(2+) serves as cofactor.

The protein localises to the cytoplasm. It catalyses the reaction a 2'-deoxyribonucleoside 5'-diphosphate + ATP = a 2'-deoxyribonucleoside 5'-triphosphate + ADP. The catalysed reaction is a ribonucleoside 5'-diphosphate + ATP = a ribonucleoside 5'-triphosphate + ADP. In terms of biological role, major role in the synthesis of nucleoside triphosphates other than ATP. The ATP gamma phosphate is transferred to the NDP beta phosphate via a ping-pong mechanism, using a phosphorylated active-site intermediate. The protein is Nucleoside diphosphate kinase of Staphylococcus epidermidis (strain ATCC 35984 / DSM 28319 / BCRC 17069 / CCUG 31568 / BM 3577 / RP62A).